The chain runs to 140 residues: RxLR effector protein Avh23 (140 aa).

An N-terminal signal peptide occupies residues 1 to 21; sequence MRLTYFLTVIVVATLHAGGTA. A RxLR-dEER motif is present at residues 54–72; that stretch reads RMLRKVKEDTVSKKDHEER. Residues 100–113 form an ADA2-binding IR1 repeat; sequence QGAFQRQNAFVNRD. The ADA2-binding IR2 repeat unit spans residues 114–127; the sequence is QGAFQRQNAFVKRA.

Belongs to the RxLR effector family. As to quaternary structure, interacts with host histone acetyl transferase SAGA complex subunit ADA2.

It localises to the secreted. The protein resides in the host nucleus. The protein localises to the host cytoplasm. Its function is as follows. Effector that suppresses plant defense responses during the early stages of pathogen infection. Suppresses cell death induced by effectors and PAMPs in plant hosts. Acts as a modulator of histone acetyltransferase (HAT) in plants. Avh23 binds to the ADA2 subunit of the HAT complex SAGA and disrupts its assembly by interfering with the association of ADA2 with the catalytic subunit GCN5. As such, Avh23 suppresses H3K9 acetylation mediated by the ADA2/GCN5 module and increases plant susceptibility. The polypeptide is RxLR effector protein Avh23 (Phytophthora sojae (Soybean stem and root rot agent)).